The following is a 428-amino-acid chain: Chaperone SurA (428 aa).

The first 13 residues, 1–13 (MLGALLLSGAVHA), serve as a signal peptide directing secretion. 2 consecutive PpiC domains span residues 164–265 (SEEF…KLLE) and 276–375 (RDEV…EVLG). Positions 211–230 (TSSSSENALEGGDMGWRKAA) are disordered.

The protein localises to the periplasm. It catalyses the reaction [protein]-peptidylproline (omega=180) = [protein]-peptidylproline (omega=0). In terms of biological role, chaperone involved in the correct folding and assembly of outer membrane proteins. Recognizes specific patterns of aromatic residues and the orientation of their side chains, which are found more frequently in integral outer membrane proteins. May act in both early periplasmic and late outer membrane-associated steps of protein maturation. This chain is Chaperone SurA, found in Pseudomonas syringae pv. syringae (strain B728a).